A 665-amino-acid polypeptide reads, in one-letter code: DNA ligase (665 aa).

Residues Asp34–Asp38, Ser83–Leu84, and Glu114 contribute to the NAD(+) site. Catalysis depends on Lys116, which acts as the N6-AMP-lysine intermediate. Residues Arg137, Glu171, Lys287, and Lys311 each contribute to the NAD(+) site. Zn(2+)-binding residues include Cys405, Cys408, Cys424, and Cys429. The 79-residue stretch at Lys587–Asp665 folds into the BRCT domain.

The protein belongs to the NAD-dependent DNA ligase family. LigA subfamily. Mg(2+) serves as cofactor. It depends on Mn(2+) as a cofactor.

It carries out the reaction NAD(+) + (deoxyribonucleotide)n-3'-hydroxyl + 5'-phospho-(deoxyribonucleotide)m = (deoxyribonucleotide)n+m + AMP + beta-nicotinamide D-nucleotide.. DNA ligase that catalyzes the formation of phosphodiester linkages between 5'-phosphoryl and 3'-hydroxyl groups in double-stranded DNA using NAD as a coenzyme and as the energy source for the reaction. It is essential for DNA replication and repair of damaged DNA. This is DNA ligase from Thermosipho africanus (strain TCF52B).